The following is a 197-amino-acid chain: MENRELTYITNSIAEAQRVMAAMLADERLLATVRKVADACIASIAQGGKVLLAGNGGSAADAQHIAGEFVSRFAFDRPGLPAVALTTDTSILTAIGNDYGYEKLFSRQVQALGNEGDVLIGYSTSGKSPNILAAFREAKAKGMTCVGFTGNRGGEMRELCDLLLEVPSADTPKIQEGHLVLGHIVCGLVEHSIFGKQ.

Positions 40–197 (CIASIAQGGK…LVEHSIFGKQ (158 aa)) constitute an SIS domain. A substrate-binding site is contributed by 55–57 (NGG). Residues histidine 64 and glutamate 68 each coordinate Zn(2+). Residues glutamate 68, 97–98 (ND), 123–125 (STS), serine 128, and glutamine 175 contribute to the substrate site. Zn(2+)-binding residues include glutamine 175 and histidine 183.

It belongs to the SIS family. GmhA subfamily. In terms of assembly, homotetramer. The cofactor is Zn(2+).

The protein resides in the cytoplasm. It catalyses the reaction 2 D-sedoheptulose 7-phosphate = D-glycero-alpha-D-manno-heptose 7-phosphate + D-glycero-beta-D-manno-heptose 7-phosphate. The protein operates within carbohydrate biosynthesis; D-glycero-D-manno-heptose 7-phosphate biosynthesis; D-glycero-alpha-D-manno-heptose 7-phosphate and D-glycero-beta-D-manno-heptose 7-phosphate from sedoheptulose 7-phosphate: step 1/1. It functions in the pathway capsule biogenesis; capsule polysaccharide biosynthesis. In terms of biological role, catalyzes the isomerization of sedoheptulose 7-phosphate in D-glycero-D-manno-heptose 7-phosphate. In Burkholderia pseudomallei (strain K96243), this protein is Phosphoheptose isomerase (gmhA).